We begin with the raw amino-acid sequence, 584 residues long: Aspartate--tRNA ligase (584 aa).

An L-aspartate-binding site is contributed by glutamate 169. Positions 193 to 196 (QLFK) are aspartate. Arginine 215 lines the L-aspartate pocket. Residues 215-217 (RDE) and glutamine 224 each bind ATP. Histidine 446 provides a ligand contact to L-aspartate. ATP is bound at residue glutamate 480. Arginine 487 is an L-aspartate binding site. 532–535 (GLDR) lines the ATP pocket.

This sequence belongs to the class-II aminoacyl-tRNA synthetase family. Type 1 subfamily. In terms of assembly, homodimer.

The protein localises to the cytoplasm. The enzyme catalyses tRNA(Asp) + L-aspartate + ATP = L-aspartyl-tRNA(Asp) + AMP + diphosphate. Catalyzes the attachment of L-aspartate to tRNA(Asp) in a two-step reaction: L-aspartate is first activated by ATP to form Asp-AMP and then transferred to the acceptor end of tRNA(Asp). The sequence is that of Aspartate--tRNA ligase from Buchnera aphidicola subsp. Schizaphis graminum (strain Sg).